Consider the following 314-residue polypeptide: Methionyl-tRNA formyltransferase (314 aa).

113-116 (SILP) is a binding site for (6S)-5,6,7,8-tetrahydrofolate.

Belongs to the Fmt family.

The enzyme catalyses L-methionyl-tRNA(fMet) + (6R)-10-formyltetrahydrofolate = N-formyl-L-methionyl-tRNA(fMet) + (6S)-5,6,7,8-tetrahydrofolate + H(+). In terms of biological role, attaches a formyl group to the free amino group of methionyl-tRNA(fMet). The formyl group appears to play a dual role in the initiator identity of N-formylmethionyl-tRNA by promoting its recognition by IF2 and preventing the misappropriation of this tRNA by the elongation apparatus. This is Methionyl-tRNA formyltransferase from Photobacterium profundum (strain SS9).